Reading from the N-terminus, the 143-residue chain is Large ribosomal subunit protein uL11 (143 aa).

It belongs to the universal ribosomal protein uL11 family. As to quaternary structure, part of the ribosomal stalk of the 50S ribosomal subunit. Interacts with L10 and the large rRNA to form the base of the stalk. L10 forms an elongated spine to which 2 L12 dimers bind in a sequential fashion forming a pentameric L10(L12)2(L12)2 complex. In terms of processing, one or more lysine residues are methylated.

In terms of biological role, forms part of the ribosomal stalk which helps the ribosome interact with GTP-bound translation factors. The sequence is that of Large ribosomal subunit protein uL11 from Agrobacterium fabrum (strain C58 / ATCC 33970) (Agrobacterium tumefaciens (strain C58)).